The primary structure comprises 648 residues: Probable potassium transport system protein Kup 1 (648 aa).

12 helical membrane-spanning segments follow: residues 25-45, 57-77, 113-133, 153-173, 184-204, 219-239, 263-283, 312-332, 362-382, 391-411, 417-437, and 446-466; these read LTLG…IYAF, IVAG…ILVV, LVMA…VITP, SVSR…LFLM, LFGP…LIHI, GVLF…AVFL, WLAI…AFAL, IPLV…VITG, IYLP…VLGF, AYGV…FLVV, WGWP…LFFF, and EGGW…VTWV.

It belongs to the HAK/KUP transporter (TC 2.A.72) family.

It localises to the cell inner membrane. It catalyses the reaction K(+)(in) + H(+)(in) = K(+)(out) + H(+)(out). Transport of potassium into the cell. Likely operates as a K(+):H(+) symporter. The chain is Probable potassium transport system protein Kup 1 from Rhizorhabdus wittichii (strain DSM 6014 / CCUG 31198 / JCM 15750 / NBRC 105917 / EY 4224 / RW1) (Sphingomonas wittichii).